The following is a 49-amino-acid chain: Small ribosomal subunit protein uS14B (49 aa).

The protein belongs to the universal ribosomal protein uS14 family. Zinc-binding uS14 subfamily. Part of the 30S ribosomal subunit.

Binds 16S rRNA, required for the assembly of 30S particles. This chain is Small ribosomal subunit protein uS14B, found in Natronomonas pharaonis (strain ATCC 35678 / DSM 2160 / CIP 103997 / JCM 8858 / NBRC 14720 / NCIMB 2260 / Gabara) (Halobacterium pharaonis).